The following is a 223-amino-acid chain: Leucyl/phenylalanyl-tRNA--protein transferase (223 aa).

The protein belongs to the L/F-transferase family.

Its subcellular location is the cytoplasm. It carries out the reaction N-terminal L-lysyl-[protein] + L-leucyl-tRNA(Leu) = N-terminal L-leucyl-L-lysyl-[protein] + tRNA(Leu) + H(+). The enzyme catalyses N-terminal L-arginyl-[protein] + L-leucyl-tRNA(Leu) = N-terminal L-leucyl-L-arginyl-[protein] + tRNA(Leu) + H(+). The catalysed reaction is L-phenylalanyl-tRNA(Phe) + an N-terminal L-alpha-aminoacyl-[protein] = an N-terminal L-phenylalanyl-L-alpha-aminoacyl-[protein] + tRNA(Phe). Functionally, functions in the N-end rule pathway of protein degradation where it conjugates Leu, Phe and, less efficiently, Met from aminoacyl-tRNAs to the N-termini of proteins containing an N-terminal arginine or lysine. The protein is Leucyl/phenylalanyl-tRNA--protein transferase of Dinoroseobacter shibae (strain DSM 16493 / NCIMB 14021 / DFL 12).